The chain runs to 82 residues: Small ribosomal subunit protein bS18 (82 aa).

Residues 1 to 20 (MVDINQIPTRRPFHRRHKTC) form a disordered region.

It belongs to the bacterial ribosomal protein bS18 family. Part of the 30S ribosomal subunit. Forms a tight heterodimer with protein bS6.

Binds as a heterodimer with protein bS6 to the central domain of the 16S rRNA, where it helps stabilize the platform of the 30S subunit. This chain is Small ribosomal subunit protein bS18, found in Brucella suis (strain ATCC 23445 / NCTC 10510).